Consider the following 143-residue polypeptide: Ribosomal RNA large subunit methyltransferase H (143 aa).

S-adenosyl-L-methionine contacts are provided by residues Gly-95 and 111-116; that span reads FSDLTF.

It belongs to the RNA methyltransferase RlmH family. As to quaternary structure, homodimer.

The protein resides in the cytoplasm. The enzyme catalyses pseudouridine(1915) in 23S rRNA + S-adenosyl-L-methionine = N(3)-methylpseudouridine(1915) in 23S rRNA + S-adenosyl-L-homocysteine + H(+). Its function is as follows. Specifically methylates the pseudouridine at position 1915 (m3Psi1915) in 23S rRNA. This Metamycoplasma arthritidis (strain 158L3-1) (Mycoplasma arthritidis) protein is Ribosomal RNA large subunit methyltransferase H.